The following is a 310-amino-acid chain: MSKKIINEVIDILEDKKYTYTMIEYPEHNRKSVDIVLNSKEPTLIRVSEDKVTKEEISDLKKIAVSTLTASLVVTNEEEEDIVSVKADNVFAVSPEGFKKVINGEKIFLYRTRGGIFIKIRNYILKHKREEMGYSIGDVAKFLGVSRKAIYDYEKGDSDVSLEVAEKLIDLFGDDIIGDVIWDSIKGKKEVIEEDITEFSPESFKSKLIYKLKENGLNILSLKLTAADLIVKDNENNRYLVTIENKDYNKSMKKFYEAKKLASYTKSELLIIIRTSKMLKECEDLGYKTYEENDIHSLIDEIKGSNGRQS.

Positions 125–180 (LKHKREEMGYSIGDVAKFLGVSRKAIYDYEKGDSDVSLEVAEKLIDLFGDDIIGDV) constitute an HTH cro/C1-type domain. The H-T-H motif DNA-binding region spans 136–155 (IGDVAKFLGVSRKAIYDYEK).

The chain is Putative HTH-type transcriptional regulatory protein M1425_1284 from Saccharolobus islandicus (strain M.14.25 / Kamchatka #1) (Sulfolobus islandicus).